Reading from the N-terminus, the 763-residue chain is Translation initiation factor IF-2, chloroplastic (763 aa).

3 disordered regions span residues 1–22 (MFLNNQNFEKKTSSYSTNNNSS), 52–122 (IDKS…SNSA), and 149–168 (NNKIPQQKKQQVASSIDQSI). Residues 13-22 (SSYSTNNNSS) are compositionally biased toward low complexity. Residues 73 to 92 (RIDKKNKNFNKAHDLLDNKK) are compositionally biased toward basic and acidic residues. Residues 93 to 104 (NKNRQRKKIKNK) are compositionally biased toward basic residues. Residues 151-168 (KIPQQKKQQVASSIDQSI) are compositionally biased toward polar residues. The tr-type G domain maps to 261 to 429 (NRPPVVTILG…ILLLAELENL (169 aa)). GTP-binding positions include 270 to 277 (GHVDHGKT), 316 to 320 (DTPGH), and 370 to 373 (SKID).

The protein belongs to the TRAFAC class translation factor GTPase superfamily. Classic translation factor GTPase family. IF-2 subfamily.

The protein resides in the plastid. It localises to the chloroplast. Functionally, one of the essential components for the initiation of protein synthesis. Protects formylmethionyl-tRNA from spontaneous hydrolysis and promotes its binding to the 30S ribosomal subunits. Also involved in the hydrolysis of GTP during the formation of the 70S ribosomal complex. This chain is Translation initiation factor IF-2, chloroplastic (infB), found in Porphyra purpurea (Red seaweed).